A 227-amino-acid chain; its full sequence is Cytidylate kinase (227 aa).

Residue 12–20 (GPSGAGKGT) participates in ATP binding.

This sequence belongs to the cytidylate kinase family. Type 1 subfamily.

It localises to the cytoplasm. It catalyses the reaction CMP + ATP = CDP + ADP. The enzyme catalyses dCMP + ATP = dCDP + ADP. This Sodalis glossinidius (strain morsitans) protein is Cytidylate kinase.